The chain runs to 421 residues: Testin (421 aa).

The PET domain occupies 92 to 199 (MILTNPVAAK…GDVKLPREMD (108 aa)). The segment at 134–164 (KQPVAGSEGAQYRKKQLAKQLPAHDQDPSKC) is disordered. The span at 155–164 (PAHDQDPSKC) shows a compositional bias: basic and acidic residues. LIM zinc-binding domains are found at residues 234–297 (YSCY…CDSE), 299–359 (PRCA…NHAV), and 362–421 (QGCH…KMMS).

The protein belongs to the prickle / espinas / testin family. In terms of assembly, interacts via LIM domain 1 with ZYX. Interacts (via LIM domain 3) with ENAH and VASP. Interacts with ALKBH4, talin, actin, alpha-actinin, GRIP1 and PXN. Interacts (via LIM domain 2) with ACTL7A (via N-terminus). Heterodimer with ACTL7A; the heterodimer interacts with ENAH to form a heterotrimer.

It localises to the cytoplasm. It is found in the cell junction. The protein resides in the focal adhesion. Functionally, scaffold protein that may play a role in cell adhesion, cell spreading and in the reorganization of the actin cytoskeleton. Plays a role in the regulation of cell proliferation. May act as a tumor suppressor. In Rhinolophus ferrumequinum (Greater horseshoe bat), this protein is Testin (TES).